Here is a 217-residue protein sequence, read N- to C-terminus: Peptide methionine sulfoxide reductase MsrA (217 aa).

C56 is an active-site residue.

It belongs to the MsrA Met sulfoxide reductase family.

The enzyme catalyses L-methionyl-[protein] + [thioredoxin]-disulfide + H2O = L-methionyl-(S)-S-oxide-[protein] + [thioredoxin]-dithiol. It carries out the reaction [thioredoxin]-disulfide + L-methionine + H2O = L-methionine (S)-S-oxide + [thioredoxin]-dithiol. Its function is as follows. Has an important function as a repair enzyme for proteins that have been inactivated by oxidation. Catalyzes the reversible oxidation-reduction of methionine sulfoxide in proteins to methionine. This Corynebacterium glutamicum (strain R) protein is Peptide methionine sulfoxide reductase MsrA.